Reading from the N-terminus, the 66-residue chain is Putative inactive (E)-beta-ocimene synthase, chloroplastic (66 aa).

A chloroplast-targeting transit peptide spans 1–25 (MAAHNLCFNSAFVCNVHHQKTQHFP).

This sequence belongs to the terpene synthase family. Tpsb subfamily. As to expression, expressed exclusively in flowers.

Its subcellular location is the plastid. The protein localises to the chloroplast. In Arabidopsis thaliana (Mouse-ear cress), this protein is Putative inactive (E)-beta-ocimene synthase, chloroplastic (TPS02).